The following is a 491-amino-acid chain: Delayed-rectifier potassium channel regulatory subunit KCNS3 (491 aa).

Residues 1-182 lie on the Cytoplasmic side of the membrane; the sequence is MVFGEFFHRP…IRMENPAYCL (182 aa). Residues 183–204 form a helical membrane-spanning segment; that stretch reads SAKLIAISSLSVVLASIVAMCV. Residues 205-220 lie on the Extracellular side of the membrane; that stretch reads HSMSEFQNEDGEVDDP. The helical transmembrane segment at 221–243 threads the bilayer; that stretch reads VLEGVEIACIAWFTGELAIRLVA. Topologically, residues 244-254 are cytoplasmic; sequence APSQKKFWKNP. The chain crosses the membrane as a helical span at residues 255 to 275; that stretch reads LNIIDFVSIIPFYATLAVDTK. Over 276–285 the chain is Extracellular; it reads EEESEDIENM. The helical; Voltage-sensor transmembrane segment at 286-306 threads the bilayer; it reads GKVVQILRLMRIFRILKLARH. Residues 307–321 lie on the Cytoplasmic side of the membrane; the sequence is SVGLRSLGATLRHSY. Residues 322-343 form a helical membrane-spanning segment; the sequence is HEVGLLLLFLSVGISIFSVLIY. Over 344–357 the chain is Extracellular; it reads SVEKDELASSLTSI. The helical intramembrane region spans 358–369; the sequence is PICWWWATISMT. Residues 370-375 carry the Selectivity filter motif; the sequence is TVGYGD. An intramembrane segment occupies 370–377; the sequence is TVGYGDTH. The Extracellular segment spans residues 378-384; the sequence is PVTLAGK. The helical transmembrane segment at 385-413 threads the bilayer; it reads IIASTCIICGILVVALPITIIFNKFSKYY. The Cytoplasmic segment spans residues 414 to 491; it reads QKQKDMDVDQ…TASLENCTAK (78 aa).

It belongs to the potassium channel family. S (TC 1.A.1.2) subfamily. Kv9.3/KCNS3 sub-subfamily. As to quaternary structure, heterotetramer with KCNB1. Does not form homomultimers. As to expression, expressed in myocytes. Detected in lung, spleen, brain and heart.

It is found in the cell membrane. Its function is as follows. Potassium channel regulatory subunit that modulates the delayed rectifier potassium channel activity of KCNB1 by namely slowing down the deactivation and inactivation time constants. While it does not form functional channel on its own, it can form functional heterotetrameric channels with KCNB1. This Rattus norvegicus (Rat) protein is Delayed-rectifier potassium channel regulatory subunit KCNS3.